The chain runs to 210 residues: Glycerol-3-phosphate acyltransferase 2 (210 aa).

The next 6 membrane-spanning stretches (helical) occupy residues L4 to Y24, V52 to M72, A73 to I93, I114 to I134, F141 to Q161, and D163 to P183.

It belongs to the PlsY family. Probably interacts with PlsX.

The protein resides in the cell membrane. It carries out the reaction an acyl phosphate + sn-glycerol 3-phosphate = a 1-acyl-sn-glycero-3-phosphate + phosphate. Its pathway is lipid metabolism; phospholipid metabolism. Functionally, catalyzes the transfer of an acyl group from acyl-phosphate (acyl-PO(4)) to glycerol-3-phosphate (G3P) to form lysophosphatidic acid (LPA). This enzyme utilizes acyl-phosphate as fatty acyl donor, but not acyl-CoA or acyl-ACP. This is Glycerol-3-phosphate acyltransferase 2 from Dehalococcoides mccartyi (strain CBDB1).